Consider the following 186-residue polypeptide: MALLSPYSKVPELNTATVLLVENEEELQNKLANAIVQHEKDFNVNVRLAKKLPLPVENKEARPRIDLIVFIVSLLSERSLQSAESSLSHLHSDCFLGKVCFLVTDARCGSHTQERLVSVRKLAASHHCPVICAEHRTADGVSAAALRLLNILQVSAGMTPMSTTALYLSTLTRCSLTSDLQEDYLQ.

The protein resides in the nucleus. It is found in the chromosome. The protein localises to the centromere. In terms of biological role, probable component of a centromeric complex involved in assembly of kinetochore proteins, mitotic progression and chromosome segregation. This is Centromere protein M (cenpm) from Danio rerio (Zebrafish).